A 651-amino-acid chain; its full sequence is Protein RcaC (651 aa).

In terms of domain architecture, Response regulatory 1 spans 2–116 (KILLVEDDDV…ELIARIRALL (115 aa)). D51 carries the post-translational modification 4-aspartylphosphate. Residues 124–223 (FPLLTWGDLL…MHGRGYYLKA (100 aa)) constitute a DNA-binding region (ompR/PhoB-type). Response regulatory domains are found at residues 384 to 519 (LLLM…VNLL) and 527 to 643 (KVMI…LRRL).

Required for chromatic adaptation. Thought to be a positive regulator of phycobiliproteins. This is Protein RcaC (rcaC) from Microchaete diplosiphon (Fremyella diplosiphon).